Here is a 250-residue protein sequence, read N- to C-terminus: 5'-nucleotidase SurE (250 aa).

Positions 8, 9, 39, and 91 each coordinate a divalent metal cation.

This sequence belongs to the SurE nucleotidase family. A divalent metal cation is required as a cofactor.

Its subcellular location is the cytoplasm. The catalysed reaction is a ribonucleoside 5'-phosphate + H2O = a ribonucleoside + phosphate. Nucleotidase that shows phosphatase activity on nucleoside 5'-monophosphates. This Leptospira interrogans serogroup Icterohaemorrhagiae serovar copenhageni (strain Fiocruz L1-130) protein is 5'-nucleotidase SurE.